We begin with the raw amino-acid sequence, 362 residues long: 3-dehydroquinate synthase (362 aa).

NAD(+) contacts are provided by residues 71–76, 105–109, 129–130, lysine 142, lysine 151, and 169–172; these read DGEQYK, GVVGD, TT, and CLKT. 3 residues coordinate Zn(2+): glutamate 184, histidine 247, and histidine 264.

The protein belongs to the sugar phosphate cyclases superfamily. Dehydroquinate synthase family. Requires Co(2+) as cofactor. The cofactor is Zn(2+). NAD(+) is required as a cofactor.

It localises to the cytoplasm. The enzyme catalyses 7-phospho-2-dehydro-3-deoxy-D-arabino-heptonate = 3-dehydroquinate + phosphate. It participates in metabolic intermediate biosynthesis; chorismate biosynthesis; chorismate from D-erythrose 4-phosphate and phosphoenolpyruvate: step 2/7. Catalyzes the conversion of 3-deoxy-D-arabino-heptulosonate 7-phosphate (DAHP) to dehydroquinate (DHQ). This Shigella boydii serotype 18 (strain CDC 3083-94 / BS512) protein is 3-dehydroquinate synthase.